The chain runs to 562 residues: NAD-dependent malic enzyme (562 aa).

Tyr-101 serves as the catalytic Proton donor. Residue Arg-154 coordinates NAD(+). Catalysis depends on Lys-172, which acts as the Proton acceptor. A divalent metal cation-binding residues include Glu-243, Asp-244, and Asp-267. NAD(+) is bound by residues Asp-267 and Asn-415.

This sequence belongs to the malic enzymes family. In terms of assembly, homotetramer. Requires Mg(2+) as cofactor. It depends on Mn(2+) as a cofactor.

The catalysed reaction is (S)-malate + NAD(+) = pyruvate + CO2 + NADH. It catalyses the reaction oxaloacetate + H(+) = pyruvate + CO2. This Shewanella loihica (strain ATCC BAA-1088 / PV-4) protein is NAD-dependent malic enzyme.